A 114-amino-acid chain; its full sequence is Ig heavy chain V-A2 region BS-1 (114 aa).

Pyrrolidone carboxylic acid is present on glutamine 1. Residues 1–107 enclose the Ig-like domain; sequence QSVKESEGGL…YLGLMDVWGP (107 aa).

The chain is Ig heavy chain V-A2 region BS-1 from Oryctolagus cuniculus (Rabbit).